The sequence spans 61 residues: Ferredoxin-3 (61 aa).

4Fe-4S ferredoxin-type domains are found at residues 2–31 (YKIT…LQDG) and 32–61 (KAVA…VEEN). [3Fe-4S] cluster-binding residues include Cys11 and Cys17. Residues Cys21, Cys41, Cys44, and Cys47 each contribute to the [4Fe-4S] cluster site. [3Fe-4S] cluster is bound at residue Cys51.

The cofactor is [3Fe-4S] cluster. It depends on [4Fe-4S] cluster as a cofactor.

Functionally, ferredoxins are iron-sulfur proteins that transfer electrons in a wide variety of metabolic reactions. This Desulfocurvibacter africanus (Desulfovibrio africanus) protein is Ferredoxin-3.